The sequence spans 596 residues: MKNIRNFSIIAHIDHGKSTLADRIISECGAISDRLMSNQVMDTMDIEKERGITIKAQSVRLNYKFNNEEYVLNLIDTPGHVDFSYEVSRSLASCEGALLVVDASQGVEAQTIANVYIALENNLEIIPVINKIDLPSADIEKVKHEIEHIIGIDCSSAICVSAKTGVGIKELIETIITKIPAPKTNDEAPTKALIYDSWFDNYLGALALVRVYEGNIAKNEEVLIMSTDKRHIVQDLFYPHPLSPIKTKKLESGEVGVIVLGLKNVADVQVGDTITLTKNKAKEAIGGFEKAKAFVFAGLYPIETDKFEDLRDALDKLKLNDSSITYEPETSLALGFGFRVGFLGLLHMEVIKERLEREFNLDLIATAPTVTYEIYQTDGEILKIQNPSELPPVNKIDHIKEPYVKATIITPSEYLGNLITLLNRKRGMQVKMDYITPERVLLEYDIPLNEIVMDFYDKLKSLTKGYASFDYEPIEFRVGDLVKLDIKVAGENVDALSIIVPNEKALSKGRELVKAMKEIVPRQLFEVAIQASIGNKIIARENVKSMGKNVTAKCYGGDITRKRKLLEKQKEGKKRMKAIGKVHLPQEAFLSVLKID.

Residues 2-183 (KNIRNFSIIA…TIITKIPAPK (182 aa)) enclose the tr-type G domain. GTP is bound by residues 14–19 (DHGKST) and 130–133 (NKID).

It belongs to the TRAFAC class translation factor GTPase superfamily. Classic translation factor GTPase family. LepA subfamily.

Its subcellular location is the cell inner membrane. It catalyses the reaction GTP + H2O = GDP + phosphate + H(+). Required for accurate and efficient protein synthesis under certain stress conditions. May act as a fidelity factor of the translation reaction, by catalyzing a one-codon backward translocation of tRNAs on improperly translocated ribosomes. Back-translocation proceeds from a post-translocation (POST) complex to a pre-translocation (PRE) complex, thus giving elongation factor G a second chance to translocate the tRNAs correctly. Binds to ribosomes in a GTP-dependent manner. This Campylobacter lari (strain RM2100 / D67 / ATCC BAA-1060) protein is Elongation factor 4.